The chain runs to 199 residues: Potassium-transporting ATPase KdpC subunit (199 aa).

Residues 7–27 (PAIVLLLALTLLTGLAYPLAM) form a helical membrane-spanning segment. The interval 67–86 (HGRPSATTAADPQDSSKTVP) is disordered. Polar residues predominate over residues 71-84 (SATTAADPQDSSKT).

This sequence belongs to the KdpC family. In terms of assembly, the system is composed of three essential subunits: KdpA, KdpB and KdpC.

It is found in the cell inner membrane. Part of the high-affinity ATP-driven potassium transport (or Kdp) system, which catalyzes the hydrolysis of ATP coupled with the electrogenic transport of potassium into the cytoplasm. This subunit acts as a catalytic chaperone that increases the ATP-binding affinity of the ATP-hydrolyzing subunit KdpB by the formation of a transient KdpB/KdpC/ATP ternary complex. This is Potassium-transporting ATPase KdpC subunit from Rhodopseudomonas palustris (strain BisB18).